An 80-amino-acid polypeptide reads, in one-letter code: Penaeidin-3 (80 aa).

The first 19 residues, 1–19, serve as a signal peptide directing secretion; sequence MRLVVCLVYLVSFALVCQG. Position 20 is a pyrrolidone carboxylic acid (Gln20). 3 disulfide bridges follow: Cys54-Cys67, Cys57-Cys74, and Cys68-Cys75.

Belongs to the penaeidin family. The N-terminus forms pyrrolidone carboxylic acid. Strongly expressed in hemocytes, and to a lesser extent in heart, muscle, gills, intestine and eyestalk. Lowest expression in hepatopancreas.

It is found in the cytoplasmic granule. Its function is as follows. Antibacterial and antifungal activity. Presents chitin-binding activity. This Penaeus indicus (Indian white prawn) protein is Penaeidin-3.